Consider the following 93-residue polypeptide: CRISPR-associated endoribonuclease Cas2 (93 aa).

Asp-13 contributes to the Mg(2+) binding site.

It belongs to the CRISPR-associated endoribonuclease Cas2 protein family. Homodimer, forms a heterotetramer with a Cas1 homodimer. Requires Mg(2+) as cofactor.

In terms of biological role, CRISPR (clustered regularly interspaced short palindromic repeat), is an adaptive immune system that provides protection against mobile genetic elements (viruses, transposable elements and conjugative plasmids). CRISPR clusters contain sequences complementary to antecedent mobile elements and target invading nucleic acids. CRISPR clusters are transcribed and processed into CRISPR RNA (crRNA). Functions as a ssRNA-specific endoribonuclease. Involved in the integration of spacer DNA into the CRISPR cassette. The chain is CRISPR-associated endoribonuclease Cas2 from Korarchaeum cryptofilum (strain OPF8).